The sequence spans 214 residues: EEF1A lysine methyltransferase 1 (214 aa).

Residue Ser2 is modified to N-acetylserine. Position 2 is a phosphoserine (Ser2).

This sequence belongs to the class I-like SAM-binding methyltransferase superfamily. EFM5 family.

The protein resides in the cytoplasm. The enzyme catalyses L-lysyl-[protein] + 3 S-adenosyl-L-methionine = N(6),N(6),N(6)-trimethyl-L-lysyl-[protein] + 3 S-adenosyl-L-homocysteine + 3 H(+). In terms of biological role, protein N-lysine methyltransferase that selectively catalyzes the trimethylation of EEF1A at 'Lys-79'. This Homo sapiens (Human) protein is EEF1A lysine methyltransferase 1.